The chain runs to 208 residues: Large ribosomal subunit protein uL4 (208 aa).

The tract at residues 44-79 (QRQGTHKSKERSEISGSTRKIGRQKGGGGARRGDMN) is disordered.

It belongs to the universal ribosomal protein uL4 family. In terms of assembly, part of the 50S ribosomal subunit.

One of the primary rRNA binding proteins, this protein initially binds near the 5'-end of the 23S rRNA. It is important during the early stages of 50S assembly. It makes multiple contacts with different domains of the 23S rRNA in the assembled 50S subunit and ribosome. Its function is as follows. Forms part of the polypeptide exit tunnel. This chain is Large ribosomal subunit protein uL4, found in Bacteroides thetaiotaomicron (strain ATCC 29148 / DSM 2079 / JCM 5827 / CCUG 10774 / NCTC 10582 / VPI-5482 / E50).